Reading from the N-terminus, the 155-residue chain is 3-dehydroquinate dehydratase (155 aa).

Tyr22 serves as the catalytic Proton acceptor. Residues Asn73, His79, and Asp86 each contribute to the substrate site. The Proton donor role is filled by His99. Residues 100 to 101 and Arg110 each bind substrate; that span reads IS.

This sequence belongs to the type-II 3-dehydroquinase family. In terms of assembly, homododecamer.

The enzyme catalyses 3-dehydroquinate = 3-dehydroshikimate + H2O. It functions in the pathway metabolic intermediate biosynthesis; chorismate biosynthesis; chorismate from D-erythrose 4-phosphate and phosphoenolpyruvate: step 3/7. Its function is as follows. Catalyzes a trans-dehydration via an enolate intermediate. The protein is 3-dehydroquinate dehydratase of Campylobacter hominis (strain ATCC BAA-381 / DSM 21671 / CCUG 45161 / LMG 19568 / NCTC 13146 / CH001A).